A 471-amino-acid chain; its full sequence is 3-isopropylmalate dehydratase large subunit (471 aa).

3 residues coordinate [4Fe-4S] cluster: Cys347, Cys407, and Cys410.

The protein belongs to the aconitase/IPM isomerase family. LeuC type 1 subfamily. In terms of assembly, heterodimer of LeuC and LeuD. It depends on [4Fe-4S] cluster as a cofactor.

The enzyme catalyses (2R,3S)-3-isopropylmalate = (2S)-2-isopropylmalate. Its pathway is amino-acid biosynthesis; L-leucine biosynthesis; L-leucine from 3-methyl-2-oxobutanoate: step 2/4. In terms of biological role, catalyzes the isomerization between 2-isopropylmalate and 3-isopropylmalate, via the formation of 2-isopropylmaleate. This Buchnera aphidicola subsp. Acyrthosiphon pisum (strain APS) (Acyrthosiphon pisum symbiotic bacterium) protein is 3-isopropylmalate dehydratase large subunit.